Here is a 237-residue protein sequence, read N- to C-terminus: Peptidase E (237 aa).

Active-site charge relay system residues include Ser122, Asp137, and His159.

Belongs to the peptidase S51 family.

The protein localises to the cytoplasm. It catalyses the reaction Dipeptidase E catalyzes the hydrolysis of dipeptides Asp-|-Xaa. It does not act on peptides with N-terminal Glu, Asn or Gln, nor does it cleave isoaspartyl peptides.. Functionally, hydrolyzes dipeptides containing N-terminal aspartate residues. May play a role in allowing the cell to use peptide aspartate to spare carbon otherwise required for the synthesis of the aspartate family of amino acids. The chain is Peptidase E from Shewanella baltica (strain OS155 / ATCC BAA-1091).